The primary structure comprises 684 residues: MAARLPIDAFGMSVIQQNGLKVYTILPTSNLSNLSDQISQNKLYAVSERHVRELDQRDKGKVKKIKFIVTSKSVDYENWFGPDTDTEIIQYLEEGGLYHALYNACKEQKSTPSFVASPSNPAPVSLKQKEILSNWKLGTIVEFCQAVGLNRTPEEPWRQLARSYGLIFISEVGALASTHVASLDADLAKFEQREQRWMKMVDYKESFAHLGTDFNRYAFCPLIPPPCPEDSEEAILIHGSWVRSEEHDGGLFVLFKRVTIMDRHQVMGARAPSEDEEESSDPTEGSMDEVTHQTETLSLDSIPPPDFSRAPVIVTGMTSAKASTSYSRDEPPEDEGNRASARPKSSPCDTCTDDSSLLQSLLSTDWVTSVSTPLHGPTLPIDAAKDLSVASESEDEVSMSQSDAPPETAMDVSANHKPNTDSAHCAPSPLPQRARKIRPTEARRRAEREKRKLKPYYRSMEECFVPACDIESYRTSVIVQPLPQNVLPFPGTQLTRETVLRKALVRECERVAPSQAPDPEELLDSDTVKICEGRAKVMYESIPSHLRGVEIESVAPESNEVSVIYPRPQISMPDNFSLGNEEERIRTYVRKRTIMERESGGYAMLRPGYGAEALEHARYVSAAGVPIPELRGQVLRSRASREMMSQTDLRLLELMMPVVNVPPEGVDKDLLAVYKATVMDILTG.

2 disordered regions span residues 267–353 and 388–449; these read MGAR…TCTD and SVAS…AERE. Residues 316-326 show a composition bias toward polar residues; it reads GMTSAKASTSY. The span at 438–449 shows a compositional bias: basic and acidic residues; that stretch reads RPTEARRRAERE.

This is an uncharacterized protein from Colorado tick fever virus (strain USA/Florio N-7180) (CTFV).